A 267-amino-acid chain; its full sequence is tRNA pseudouridine synthase A (267 aa).

The active-site Nucleophile is the aspartate 55. Tyrosine 111 lines the substrate pocket.

It belongs to the tRNA pseudouridine synthase TruA family.

The catalysed reaction is uridine(38/39/40) in tRNA = pseudouridine(38/39/40) in tRNA. Its function is as follows. Formation of pseudouridine at positions 38, 39 and 40 in the anticodon stem and loop of transfer RNAs. The protein is tRNA pseudouridine synthase A of Thermococcus gammatolerans (strain DSM 15229 / JCM 11827 / EJ3).